A 908-amino-acid polypeptide reads, in one-letter code: MLSALFKKIFGSRNERLVKQYAQNVKAINALEPSMQALTDEQLRAKTEEFKQRYQQGESLEKILPEAFAVVREGGRRVLNMRHFDVQLIGGMVLHAGKIAEMRTGEGKTLVATLPAYLNALTGKGVHVVTVNDYLARRDAEWMSRLYNFLGLSVGINLSQMPHGEKQKAYAADITYGTNNEFGFDYLRDNMVFTAEERVQRGLNYALVDEVDSILIDEARTPLIISGQADDSVDLYLQMNSIAAKLVRQEKEDGEGDFWVDEKSHQVLLSEQGHEHAEALLAEAGLLAEGSSLYDAANISLVHHMYAALRAQSLYHRDQHYVVRDGEIVIVDEFTGRMMAGRRWSDGLHQAVEAKEGVTIQKENQTLASITFQNYFRMYGKLSGMTGTADTEAYEFNQIYGLETVVIPTHRPLQRKDYMDKVYRTAKEKYQAVIDDIKECQKRGQPVLVGTTSIENSELISKVLSEAKLEHQVLNAKQHEREAHIIAQAGRPGMITIATNMAGRGTDIVLGGNPEGEIAEIEADEQLSEADKAARIAALKADWQVKHDAVLAAGGLHIIGTERHESRRVDNQLRGRAGRQGDPGSSRFYLSLEDQLLRIFASDRVGAIMERLKMPEGEAIEHPWVTRAIENAQRKVEGRNFDIRKQLLEYDDVANDQRKVIYQQRNELLEAADVGETIAAMRVDVIHDLIATYIPPESLEEQWDVPGLEKALQADLGLEIPLQKMLEENPNLHEETLREHIVEAANAAYKAKEEQASAPVLRQFERAVMLQSLDNHWREHLAALDHLRQGIHLRSYAQKNPKQEYKREAFALFSSMLDTVKREVTQVTMLVKVQSEADVEAVEKHPELENVQYQHADFDEALGNAEESDEASDQSVKTFERAGAKVGRNDPCPCGSGKKYKQCHGKLS.

ATP-binding positions include Gln87, 105–109, and Asp507; that span reads GEGKT. A disordered region spans residues 860 to 898; sequence EALGNAEESDEASDQSVKTFERAGAKVGRNDPCPCGSGK. Zn(2+)-binding residues include Cys892, Cys894, Cys903, and His904.

The protein belongs to the SecA family. Monomer and homodimer. Part of the essential Sec protein translocation apparatus which comprises SecA, SecYEG and auxiliary proteins SecDF-YajC and YidC. Zn(2+) is required as a cofactor.

Its subcellular location is the cell inner membrane. It localises to the cytoplasm. The catalysed reaction is ATP + H2O + cellular proteinSide 1 = ADP + phosphate + cellular proteinSide 2.. Functionally, part of the Sec protein translocase complex. Interacts with the SecYEG preprotein conducting channel. Has a central role in coupling the hydrolysis of ATP to the transfer of proteins into and across the cell membrane, serving both as a receptor for the preprotein-SecB complex and as an ATP-driven molecular motor driving the stepwise translocation of polypeptide chains across the membrane. In Methylobacillus flagellatus (strain ATCC 51484 / DSM 6875 / VKM B-1610 / KT), this protein is Protein translocase subunit SecA.